Here is a 64-residue protein sequence, read N- to C-terminus: Disintegrin schistatin (64 aa).

Residues 1-64 (NSVHPCCDPV…PDCPRNRYNV (64 aa)) form the Disintegrin domain. 4 cysteine pairs are disulfide-bonded: Cys6–Cys29, Cys20–Cys26, Cys25–Cys50, and Cys38–Cys57. The Cell attachment site signature appears at 42–44 (RGD).

The protein belongs to the disintegrin family. Dimeric disintegrin subfamily. Homodimer; disulfide-linked. In terms of tissue distribution, expressed by the venom gland.

Its subcellular location is the secreted. Its function is as follows. May bind to both alpha-IIb/beta-3 (ITGA2B/ITGB3) and alpha-V/beta-3 (ITGAV/ITGB3) integrins, and may inhibit platelet aggregation. This Echis carinatus (Saw-scaled viper) protein is Disintegrin schistatin.